The primary structure comprises 726 residues: Long-chain-fatty-acid--CoA ligase ACSBG1 (726 aa).

The tract at residues methionine 1–proline 39 is disordered. Residues leucine 17–serine 36 are compositionally biased toward polar residues. The residue at position 36 (serine 36) is a Phosphoserine. Phosphotyrosine is present on tyrosine 641. The disordered stretch occupies residues serine 707–serine 726.

Belongs to the ATP-dependent AMP-binding enzyme family. Bubblegum subfamily.

The protein resides in the cytoplasm. It is found in the cytoplasmic vesicle. It localises to the microsome. The protein localises to the endoplasmic reticulum. Its subcellular location is the cell membrane. It catalyses the reaction a long-chain fatty acid + ATP + CoA = a long-chain fatty acyl-CoA + AMP + diphosphate. It carries out the reaction (E)-hexadec-2-enoate + ATP + CoA = (2E)-hexadecenoyl-CoA + AMP + diphosphate. The catalysed reaction is hexadecanoate + ATP + CoA = hexadecanoyl-CoA + AMP + diphosphate. In terms of biological role, catalyzes the conversion of fatty acids such as long-chain and very long-chain fatty acids to their active form acyl-CoAs for both synthesis of cellular lipids, and degradation via beta-oxidation. Can activate diverse saturated, monosaturated and polyunsaturated fatty acids. The chain is Long-chain-fatty-acid--CoA ligase ACSBG1 from Bos taurus (Bovine).